Reading from the N-terminus, the 1291-residue chain is Capping protein-inhibiting regulator of actin dynamics (1291 aa).

A phosphoserine mark is found at S7 and S28. Disordered regions lie at residues 48–71 (KFGQ…SSEE), 84–137 (QQDI…AGTI), 159–221 (HKLA…HEEK), 234–253 (KCKR…EQRR), 267–663 (QELL…ASHA), and 701–1238 (LGLS…TSVT). S132 carries the post-translational modification Phosphoserine. Positions 159-176 (HKLAVKPKNQRVSRKHRW) are enriched in basic residues. A compositionally biased stretch (polar residues) spans 184 to 199 (EPGSFESQSSLDQNGQ). A compositionally biased stretch (basic and acidic residues) spans 201–221 (GEDKHIWHGEEPEPLESHEEK). Positions 270–291 (LEEEEEGEEEEEVKEEGEEGEE) are enriched in acidic residues. Basic and acidic residues-rich tracts occupy residues 302 to 318 (PPEE…RCTE), 326 to 461 (DPAR…EDAK), and 470 to 483 (EAKR…KETP). Residues 324 to 560 (ADDPARLEAE…DLDAHCGGVD (237 aa)) form a required for interaction with actin-capping proteins region. Position 482 is a phosphothreonine (T482). Residues S493 and S510 each carry the phosphoserine modification. Basic and acidic residues-rich tracts occupy residues 506 to 527 (ADQR…REDL) and 534 to 543 (EIAEEPRGEG). A compositionally biased stretch (low complexity) spans 580-593 (EGTPAPEENEATAA). Basic and acidic residues predominate over residues 594–612 (DIDRKVEELRWQEVDERQT). A Phosphoserine modification is found at S636. T639 bears the Phosphothreonine mark. Residues 749 to 778 (KNSEGDQRGDREPARAGDEPVPRARCDSRG) show a composition bias toward basic and acidic residues. S867 carries the phosphoserine modification. Low complexity predominate over residues 875–888 (TESTTTLDSETTSD). Residues 969 to 983 (QERKPALSPRKDSAE) show a composition bias toward basic and acidic residues. T1033 bears the Phosphothreonine mark. At S1037 the chain carries Phosphoserine. Basic and acidic residues predominate over residues 1056-1070 (GKLDSEPSETAKESS). The residue at position 1076 (S1076) is a Phosphoserine. 3 stretches are compositionally biased toward basic and acidic residues: residues 1081–1098 (EELK…EKKP), 1117–1141 (TGRK…EKVE), and 1157–1182 (GFRE…KLSK). Composition is skewed to polar residues over residues 1183–1197 (ETVS…SRAS) and 1229–1238 (KSNTLPTSVT).

Directly interacts with actin-capping proteins CAPZA1, CAPZA2 and CAPZB; this interaction decreases the binding of capping proteins to actin. Expressed in the small intestine (at protein level).

It is found in the cytoplasm. It localises to the cytosol. Involved in epithelial cell integrity by acting on the dynamics of the actin cytoskeleton. Positively regulates the actin polymerization, by inhibiting the interaction of actin-capping proteins with actin. The sequence is that of Capping protein-inhibiting regulator of actin dynamics from Mus musculus (Mouse).